We begin with the raw amino-acid sequence, 406 residues long: Cysteine desulfurase (406 aa).

The residue at position 226 (K226) is an N6-(pyridoxal phosphate)lysine. The Cysteine persulfide intermediate role is filled by C364.

The protein belongs to the class-V pyridoxal-phosphate-dependent aminotransferase family. Csd subfamily. In terms of assembly, homodimer. Interacts with SufE and the SufBCD complex composed of SufB, SufC and SufD. The interaction with SufE is required to mediate the direct transfer of the sulfur atom from the S-sulfanylcysteine. Requires pyridoxal 5'-phosphate as cofactor.

The protein resides in the cytoplasm. The enzyme catalyses (sulfur carrier)-H + L-cysteine = (sulfur carrier)-SH + L-alanine. The catalysed reaction is L-selenocysteine + AH2 = hydrogenselenide + L-alanine + A + H(+). It participates in cofactor biosynthesis; iron-sulfur cluster biosynthesis. In terms of biological role, cysteine desulfurases mobilize the sulfur from L-cysteine to yield L-alanine, an essential step in sulfur metabolism for biosynthesis of a variety of sulfur-containing biomolecules. Component of the suf operon, which is activated and required under specific conditions such as oxidative stress and iron limitation. Acts as a potent selenocysteine lyase in vitro, that mobilizes selenium from L-selenocysteine. Selenocysteine lyase activity is however unsure in vivo. This chain is Cysteine desulfurase, found in Cronobacter sakazakii (strain ATCC BAA-894) (Enterobacter sakazakii).